The chain runs to 362 residues: Biotin synthase (362 aa).

The Radical SAM core domain maps to 39–267; the sequence is NVVQVSTLLS…ETQVRLSAGR (229 aa). Residues C54, C58, and C61 each coordinate [4Fe-4S] cluster. [2Fe-2S] cluster-binding residues include C98, C130, C190, and R262. Residues 317 to 362 form a disordered region; sequence PFTKVSQPTTVEAKDSRYESLGEKPKWSRPSHTIEKNLELSGKGKN. Residues 328 to 354 show a composition bias toward basic and acidic residues; the sequence is EAKDSRYESLGEKPKWSRPSHTIEKNL.

It belongs to the radical SAM superfamily. Biotin synthase family. In terms of assembly, homodimer. [4Fe-4S] cluster serves as cofactor. [2Fe-2S] cluster is required as a cofactor.

The catalysed reaction is (4R,5S)-dethiobiotin + (sulfur carrier)-SH + 2 reduced [2Fe-2S]-[ferredoxin] + 2 S-adenosyl-L-methionine = (sulfur carrier)-H + biotin + 2 5'-deoxyadenosine + 2 L-methionine + 2 oxidized [2Fe-2S]-[ferredoxin]. Its pathway is cofactor biosynthesis; biotin biosynthesis; biotin from 7,8-diaminononanoate: step 2/2. In terms of biological role, catalyzes the conversion of dethiobiotin (DTB) to biotin by the insertion of a sulfur atom into dethiobiotin via a radical-based mechanism. This Flavobacterium psychrophilum (strain ATCC 49511 / DSM 21280 / CIP 103535 / JIP02/86) protein is Biotin synthase.